The following is a 563-amino-acid chain: Sulfite reductase [NADPH] hemoprotein beta-component (563 aa).

[4Fe-4S] cluster contacts are provided by Cys-427, Cys-433, Cys-472, and Cys-476. Siroheme is bound at residue Cys-476.

This sequence belongs to the nitrite and sulfite reductase 4Fe-4S domain family. In terms of assembly, alpha(8)-beta(8). The alpha component is a flavoprotein, the beta component is a hemoprotein. Requires siroheme as cofactor. The cofactor is [4Fe-4S] cluster.

The catalysed reaction is hydrogen sulfide + 3 NADP(+) + 3 H2O = sulfite + 3 NADPH + 4 H(+). It participates in sulfur metabolism; hydrogen sulfide biosynthesis; hydrogen sulfide from sulfite (NADPH route): step 1/1. Component of the sulfite reductase complex that catalyzes the 6-electron reduction of sulfite to sulfide. This is one of several activities required for the biosynthesis of L-cysteine from sulfate. The chain is Sulfite reductase [NADPH] hemoprotein beta-component from Acidithiobacillus ferrooxidans (strain ATCC 53993 / BNL-5-31) (Leptospirillum ferrooxidans (ATCC 53993)).